The sequence spans 834 residues: Taste receptor type 1 member 2 (834 aa).

The signal sequence occupies residues 1 to 19 (MGPRARTVCFLFFLLWVLA). Residues 20–561 (ELAENSDFHL…SFLEWHEAAT (542 aa)) are Extracellular-facing. Asn-84, Asn-292, Asn-312, Asn-363, Asn-423, Asn-482, and Asn-522 each carry an N-linked (GlcNAc...) asparagine glycan. Residues 562 to 582 (IAVALLAALGFLXXXXXXXXX) traverse the membrane as a helical segment. Over 583 to 597 (XXXXXXPMVRSAGGP) the chain is Cytoplasmic. A helical membrane pass occupies residues 598 to 618 (MCFLMLTLLLVAYMVVPVYVG). Residues 619–630 (PPKVTTCLCRQA) are Extracellular-facing. A helical membrane pass occupies residues 631 to 651 (LFPVCFTICISCITMRSFQIV). At 652 to 676 (CVFKMASRFPRAYSYWVRYQGSYVS) the chain is on the cytoplasmic side. The helical transmembrane segment at 677 to 697 (VAFITALKVVTVVISLLATGL) threads the bilayer. Over 698–722 (NPTTRADTDDPKIMIISCNPNYRNS) the chain is Extracellular. Residues 723–743 (LLFNTSLDLLLSVVGFSFAYM) form a helical membrane-spanning segment. The Cytoplasmic portion of the chain corresponds to 744 to 755 (GKELPTNYNEAK). The chain crosses the membrane as a helical span at residues 756–776 (FITFSMTFYFTSSVSLCTFMS). Over 777-779 (VYD) the chain is Extracellular. The helical transmembrane segment at 780–800 (GVLVTIVDLLVTVFNLLAISL) threads the bilayer. Residues 801–834 (GYFGPKCYMILFYPERNTPAYFNSMIQGYTMRRD) lie on the Cytoplasmic side of the membrane.

The protein belongs to the G-protein coupled receptor 3 family. TAS1R subfamily. Forms heterodimers with TAS1R3.

It is found in the cell membrane. Its function is as follows. Putative taste receptor. TAS1R2/TAS1R3 recognizes diverse natural and synthetic sweeteners. In Cebuella pygmaea (Pygmy marmoset), this protein is Taste receptor type 1 member 2 (TAS1R2).